A 361-amino-acid polypeptide reads, in one-letter code: MSNVFNFSAGPAMMPPAVLKKAQEELLNWQGQGTSVMEVSHRGKYFMELITQADKDFRELYNIPENYKILFLQGGARGQFAAIPMNLANNKGKALYLNTGHWSATAAKEARNFTEVDELNITEQIDGLTRVNRLDFSDIAEQYDYVHYCPNETITGVEINEIPNVGNAVLVADMSSNIMARKLDISKFGIIYAGAQKNLGPAGIVIVIVREDLIGHARKATPSIWNYEVQANADSMINTPPTFAWYLCSLVFKDLLANGGIDTVEKRNAQKAALLYDYLDQTVFYHNTIAKENRSVMNVTFTTGDDQLNAKFVAQATEAGLQALKGHKVFGGMRASIYNAMPVEGVEALIAFMKKFEAENA.

An L-glutamate-binding site is contributed by R42. Pyridoxal 5'-phosphate is bound by residues A76–R77, W102, T153, D173, and Q196. Position 197 is an N6-(pyridoxal phosphate)lysine (K197). N238–T239 is a pyridoxal 5'-phosphate binding site.

The protein belongs to the class-V pyridoxal-phosphate-dependent aminotransferase family. SerC subfamily. In terms of assembly, homodimer. The cofactor is pyridoxal 5'-phosphate.

It is found in the cytoplasm. The catalysed reaction is O-phospho-L-serine + 2-oxoglutarate = 3-phosphooxypyruvate + L-glutamate. It catalyses the reaction 4-(phosphooxy)-L-threonine + 2-oxoglutarate = (R)-3-hydroxy-2-oxo-4-phosphooxybutanoate + L-glutamate. It functions in the pathway amino-acid biosynthesis; L-serine biosynthesis; L-serine from 3-phospho-D-glycerate: step 2/3. Its pathway is cofactor biosynthesis; pyridoxine 5'-phosphate biosynthesis; pyridoxine 5'-phosphate from D-erythrose 4-phosphate: step 3/5. Its function is as follows. Catalyzes the reversible conversion of 3-phosphohydroxypyruvate to phosphoserine and of 3-hydroxy-2-oxo-4-phosphonooxybutanoate to phosphohydroxythreonine. This chain is Phosphoserine aminotransferase, found in Mannheimia succiniciproducens (strain KCTC 0769BP / MBEL55E).